A 489-amino-acid chain; its full sequence is UDP-N-acetylmuramoyl-L-alanyl-D-glutamate--2,6-diaminopimelate ligase (489 aa).

S34 is a binding site for UDP-N-acetyl-alpha-D-muramoyl-L-alanyl-D-glutamate. 110-116 contacts ATP; the sequence is GTAGKTS. Residues 152-153, S179, Q185, and R187 each bind UDP-N-acetyl-alpha-D-muramoyl-L-alanyl-D-glutamate; that span reads TT. Residue K219 is modified to N6-carboxylysine. Residues R383, 407–410, G455, and E459 contribute to the meso-2,6-diaminopimelate site; that span reads DNPR. Residues 407–410 carry the Meso-diaminopimelate recognition motif motif; that stretch reads DNPR.

It belongs to the MurCDEF family. MurE subfamily. The cofactor is Mg(2+). Carboxylation is probably crucial for Mg(2+) binding and, consequently, for the gamma-phosphate positioning of ATP.

The protein resides in the cytoplasm. The catalysed reaction is UDP-N-acetyl-alpha-D-muramoyl-L-alanyl-D-glutamate + meso-2,6-diaminopimelate + ATP = UDP-N-acetyl-alpha-D-muramoyl-L-alanyl-gamma-D-glutamyl-meso-2,6-diaminopimelate + ADP + phosphate + H(+). Its pathway is cell wall biogenesis; peptidoglycan biosynthesis. Functionally, catalyzes the addition of meso-diaminopimelic acid to the nucleotide precursor UDP-N-acetylmuramoyl-L-alanyl-D-glutamate (UMAG) in the biosynthesis of bacterial cell-wall peptidoglycan. In Agrobacterium fabrum (strain C58 / ATCC 33970) (Agrobacterium tumefaciens (strain C58)), this protein is UDP-N-acetylmuramoyl-L-alanyl-D-glutamate--2,6-diaminopimelate ligase.